The primary structure comprises 201 residues: MARYTGPKSRIARKFGEGIFGADKVLSKKNYPPGQHGNSRKRKTSEYGIQLREKQKAKYTYGVLEKQFRNLFEKAATAKGITGEVLLQMLEGRLDNIVFRLGIAPTRAAARQLVGHKHITVDGQVVNIPSYAVKPGQLIGVRERSKSLEVIANSLAGFNHSKYAWLEWDEASKVGKLLHIPERADIPENIKEHLIVELYSK.

Positions lysine 28–tyrosine 47 are disordered. Residues glycine 92 to leucine 155 enclose the S4 RNA-binding domain.

The protein belongs to the universal ribosomal protein uS4 family. As to quaternary structure, part of the 30S ribosomal subunit. Contacts protein S5. The interaction surface between S4 and S5 is involved in control of translational fidelity.

One of the primary rRNA binding proteins, it binds directly to 16S rRNA where it nucleates assembly of the body of the 30S subunit. Its function is as follows. With S5 and S12 plays an important role in translational accuracy. The protein is Small ribosomal subunit protein uS4 of Bacteroides fragilis (strain YCH46).